The primary structure comprises 438 residues: Glyceraldehyde-3-phosphate dehydrogenase B, chloroplastic (438 aa).

Residues 1-53 (CLSKKFEVAEFAGLRSSGCVTFSNKESSFFDVVSAQLTPKTTRSTPVKGETVA) constitute a chloroplast transit peptide. Residues 64–65 (RI), D88, and R133 each bind NADP(+). Residues 207 to 209 (SCT), T238, R253, 266 to 267 (TG), and R289 contribute to the D-glyceraldehyde 3-phosphate site. C208 (nucleophile) is an active-site residue. Residue N372 coordinates NADP(+).

It belongs to the glyceraldehyde-3-phosphate dehydrogenase family. As to quaternary structure, tetramer of either four A chains (GAPDH 2) or two A and two B chains (GAPDH 1).

It localises to the plastid. The protein localises to the chloroplast. It catalyses the reaction D-glyceraldehyde 3-phosphate + phosphate + NADP(+) = (2R)-3-phospho-glyceroyl phosphate + NADPH + H(+). Its pathway is carbohydrate biosynthesis; Calvin cycle. The polypeptide is Glyceraldehyde-3-phosphate dehydrogenase B, chloroplastic (GAPB) (Nicotiana tabacum (Common tobacco)).